A 386-amino-acid polypeptide reads, in one-letter code: Queuine tRNA-ribosyltransferase (386 aa).

Asp-99 acts as the Proton acceptor in catalysis. Substrate is bound by residues 99-103 (DSGGF), Asp-153, Gln-198, and Gly-225. An RNA binding region spans residues 256 to 262 (GVGKPED). The active-site Nucleophile is Asp-275. The segment at 280–284 (TRNAR) is RNA binding; important for wobble base 34 recognition. Residues Cys-313, Cys-315, Cys-318, and His-344 each contribute to the Zn(2+) site.

It belongs to the queuine tRNA-ribosyltransferase family. In terms of assembly, homodimer. Within each dimer, one monomer is responsible for RNA recognition and catalysis, while the other monomer binds to the replacement base PreQ1. Zn(2+) serves as cofactor.

The catalysed reaction is 7-aminomethyl-7-carbaguanine + guanosine(34) in tRNA = 7-aminomethyl-7-carbaguanosine(34) in tRNA + guanine. It participates in tRNA modification; tRNA-queuosine biosynthesis. Functionally, catalyzes the base-exchange of a guanine (G) residue with the queuine precursor 7-aminomethyl-7-deazaguanine (PreQ1) at position 34 (anticodon wobble position) in tRNAs with GU(N) anticodons (tRNA-Asp, -Asn, -His and -Tyr). Catalysis occurs through a double-displacement mechanism. The nucleophile active site attacks the C1' of nucleotide 34 to detach the guanine base from the RNA, forming a covalent enzyme-RNA intermediate. The proton acceptor active site deprotonates the incoming PreQ1, allowing a nucleophilic attack on the C1' of the ribose to form the product. After dissociation, two additional enzymatic reactions on the tRNA convert PreQ1 to queuine (Q), resulting in the hypermodified nucleoside queuosine (7-(((4,5-cis-dihydroxy-2-cyclopenten-1-yl)amino)methyl)-7-deazaguanosine). In Acinetobacter baylyi (strain ATCC 33305 / BD413 / ADP1), this protein is Queuine tRNA-ribosyltransferase.